Here is a 287-residue protein sequence, read N- to C-terminus: MIKVETKTLPAISLGNLDSYIREANSWPMLSSQEEKYLSEKLFYHGDLNAAKTLILSHLRFVIHVSRNYSGYGLLQADLIQEGNIGLMKAVRRFNPKIGVRLVSFAVHWIKSEIHEYVLRNWRIVKVATTKSQRKLFFNLRKTKQRLGWFNDHELELVAQELGVKREDVREMESRMSAQDIALHHVPDNFREEQNFSYTIPYLKDSLSDFANHVEEDNWEAHKTNKLSNALSSLDERSRNIIHARWLDDSDHKMTLREIAHNYGISAERVRQLEKNAMKKLKVAIET.

The tract at residues 54–123 (LILSHLRFVI…IHEYVLRNWR (70 aa)) is sigma-70 factor domain-2. Positions 78-81 (DLIQ) match the Interaction with polymerase core subunit RpoC motif. The interval 230-283 (ALSSLDERSRNIIHARWLDDSDHKMTLREIAHNYGISAERVRQLEKNAMKKLKV) is sigma-70 factor domain-4. Residues 256–275 (LREIAHNYGISAERVRQLEK) constitute a DNA-binding region (H-T-H motif).

The protein belongs to the sigma-70 factor family. RpoH subfamily. In terms of assembly, interacts with the RNA polymerase core enzyme.

It is found in the cytoplasm. In terms of biological role, sigma factors are initiation factors that promote the attachment of RNA polymerase to specific initiation sites and are then released. This sigma factor is involved in regulation of expression of heat shock genes. The protein is RNA polymerase sigma factor RpoH of Buchnera aphidicola subsp. Baizongia pistaciae (strain Bp).